The sequence spans 219 residues: Lipid transferase CIDEB (219 aa).

Threonine 18 is modified (phosphothreonine). The 77-residue stretch at 34 to 110 (PQRPFRVCDH…VLEQGQSWSP (77 aa)) folds into the CIDE-N domain.

Belongs to the CIDE family. In terms of assembly, interacts with DFFA. Interacts with DFFB; inhibited by DFFB. Interacts with APOB. Interacts with PREB/SEC12; facilitating loading of SCAP-SREBP into COPII vesicles. Highly enriched in the liver.

The protein resides in the lipid droplet. Its subcellular location is the endoplasmic reticulum membrane. It is found in the golgi apparatus. It localises to the cytoplasmic vesicle. The protein localises to the COPI-coated vesicle. Its function is as follows. Lipid transferase specifically expressed in hepatocytes, which promotes unilocular lipid droplet formation by mediating lipid droplet fusion. Lipid droplet fusion promotes their enlargement, restricting lipolysis and favoring lipid storage. Localizes on the lipid droplet surface, at focal contact sites between lipid droplets, and mediates atypical lipid droplet fusion by promoting directional net neutral lipid transfer from the smaller to larger lipid droplets. The transfer direction may be driven by the internal pressure difference between the contacting lipid droplet pair. Promotes lipid exchange and lipid droplet fusion in both small and large lipid droplet-containing hepatocytes. In addition to its role in lipid droplet fusion, also involved in cytoplasmic vesicle biogenesis and transport. Required for very-low-density lipoprotein (VLDL) lipidation and maturation. Probably involved in the biogenesis of VLDL transport vesicles by forming a COPII vesicle coat and facilitating the formation of endoplasmic reticulum-derived large vesicles. Also involved in sterol-regulated export of the SCAP-SREBP complex, composed of SCAP, SREBF1/SREBP1 and SREBF2/SREBP2, by promoting loading of SCAP-SREBP into COPII vesicles. May also activate apoptosis. This chain is Lipid transferase CIDEB, found in Mus musculus (Mouse).